A 265-amino-acid chain; its full sequence is Putative cysteine-rich receptor-like protein kinase At4g11521 (265 aa).

A signal peptide spans 1–23; the sequence is MMLNTLFLPIFLFFLITFDYVST. Gnk2-homologous domains lie at 24 to 122 and 128 to 241; these read QTCF…NISF and MEPS…LYPF. N-linked (GlcNAc...) asparagine glycosylation is found at Asn34, Asn102, and Asn119. Asn247 carries an N-linked (GlcNAc...) asparagine glycan.

It belongs to the protein kinase superfamily. Ser/Thr protein kinase family. CRK subfamily.

It localises to the secreted. The chain is Putative cysteine-rich receptor-like protein kinase At4g11521 from Arabidopsis thaliana (Mouse-ear cress).